Here is a 525-residue protein sequence, read N- to C-terminus: Serine/threonine protein phosphatase 2A 55 kDa regulatory subunit B beta isoform (525 aa).

Residues 1–31 (MDPFSKSPDDDDLRPEAEAARRPQPQPQPRE) are disordered. WD repeat units follow at residues 48–87 (QEVD…DSAS) and 124–165 (EIEE…VKRI). Positions 169-191 (NLNTSQSSGNGTTSSSSSSSSRA) are disordered. The segment covering 171-189 (NTSQSSGNGTTSSSSSSSS) has biased composition (low complexity). WD repeat units follow at residues 244–282 (AHDY…QSFN), 293–333 (DLTE…LCDN), 352–390 (EIIA…GPVA), and 495–525 (DLST…MYYA).

This sequence belongs to the phosphatase 2A regulatory subunit B family. In terms of assembly, PP2A consists of a common heteromeric enzyme, composed of a catalytic subunit (subunits C), a constant regulatory subunit (subunit A), and a variety of regulatory subunits such as subunits B (the R2/B/PR55/B55, R3/B''/PR72/PR130/PR59 and R5/B'/B56 families).

Its function is as follows. The B regulatory subunit may modulate substrate selectivity and catalytic activity, and may also direct the localization of the catalytic enzyme to a particular subcellular compartment. This is Serine/threonine protein phosphatase 2A 55 kDa regulatory subunit B beta isoform from Oryza sativa subsp. indica (Rice).